Reading from the N-terminus, the 496-residue chain is Cytosol aminopeptidase (496 aa).

The Mn(2+) site is built by Lys-258 and Asp-263. The active site involves Lys-270. The Mn(2+) site is built by Asp-281, Asp-340, and Glu-342. The active site involves Arg-344.

This sequence belongs to the peptidase M17 family. Mn(2+) is required as a cofactor.

The protein localises to the cytoplasm. The enzyme catalyses Release of an N-terminal amino acid, Xaa-|-Yaa-, in which Xaa is preferably Leu, but may be other amino acids including Pro although not Arg or Lys, and Yaa may be Pro. Amino acid amides and methyl esters are also readily hydrolyzed, but rates on arylamides are exceedingly low.. It catalyses the reaction Release of an N-terminal amino acid, preferentially leucine, but not glutamic or aspartic acids.. Its function is as follows. Presumably involved in the processing and regular turnover of intracellular proteins. Catalyzes the removal of unsubstituted N-terminal amino acids from various peptides. This Helicobacter pylori (strain J99 / ATCC 700824) (Campylobacter pylori J99) protein is Cytosol aminopeptidase (pepA).